A 214-amino-acid polypeptide reads, in one-letter code: Germin-like protein 9-3 (214 aa).

Positions 1–23 (MASSILLLVVLAVVSAPVALVMA) are cleaved as a signal peptide. N-linked (GlcNAc...) asparagine glycosylation is found at Asn-42, Asn-60, and Asn-69. The Cupin type-1 domain occupies 59 to 202 (MNMSMPMPNA…SFKTDVPTIQ (144 aa)). Residues His-104, His-106, Glu-111, and His-150 each coordinate Mn(2+).

Belongs to the germin family. In terms of assembly, oligomer (believed to be a pentamer but probably hexamer).

It is found in the secreted. The protein resides in the extracellular space. It localises to the apoplast. Functionally, may play a role in plant defense. Probably has no oxalate oxidase activity even if the active site is conserved. This chain is Germin-like protein 9-3, found in Oryza sativa subsp. japonica (Rice).